The sequence spans 227 residues: Cytochrome c oxidase subunit 2 (227 aa).

At 1 to 14 (MAYPFQLGLQDATS) the chain is on the mitochondrial intermembrane side. Residues 15–45 (PIMEELTSFHDHTLMIVFLISSLVLYIILLM) form a helical membrane-spanning segment. At 46 to 59 (LTTKLTHTSTMDAQ) the chain is on the mitochondrial matrix side. A helical transmembrane segment spans residues 60–87 (EVETIWTILPAVILILIALPSLRILYMM). Residues 88–227 (DEINNPALTV…HFENWSASMI (140 aa)) lie on the Mitochondrial intermembrane side of the membrane. His-161, Cys-196, Glu-198, Cys-200, His-204, and Met-207 together coordinate Cu cation. Glu-198 serves as a coordination point for Mg(2+).

Belongs to the cytochrome c oxidase subunit 2 family. Component of the cytochrome c oxidase (complex IV, CIV), a multisubunit enzyme composed of 14 subunits. The complex is composed of a catalytic core of 3 subunits MT-CO1, MT-CO2 and MT-CO3, encoded in the mitochondrial DNA, and 11 supernumerary subunits COX4I, COX5A, COX5B, COX6A, COX6B, COX6C, COX7A, COX7B, COX7C, COX8 and NDUFA4, which are encoded in the nuclear genome. The complex exists as a monomer or a dimer and forms supercomplexes (SCs) in the inner mitochondrial membrane with NADH-ubiquinone oxidoreductase (complex I, CI) and ubiquinol-cytochrome c oxidoreductase (cytochrome b-c1 complex, complex III, CIII), resulting in different assemblies (supercomplex SCI(1)III(2)IV(1) and megacomplex MCI(2)III(2)IV(2)). Found in a complex with TMEM177, COA6, COX18, COX20, SCO1 and SCO2. Interacts with TMEM177 in a COX20-dependent manner. Interacts with COX20. Interacts with COX16. The cofactor is Cu cation.

Its subcellular location is the mitochondrion inner membrane. It carries out the reaction 4 Fe(II)-[cytochrome c] + O2 + 8 H(+)(in) = 4 Fe(III)-[cytochrome c] + 2 H2O + 4 H(+)(out). Component of the cytochrome c oxidase, the last enzyme in the mitochondrial electron transport chain which drives oxidative phosphorylation. The respiratory chain contains 3 multisubunit complexes succinate dehydrogenase (complex II, CII), ubiquinol-cytochrome c oxidoreductase (cytochrome b-c1 complex, complex III, CIII) and cytochrome c oxidase (complex IV, CIV), that cooperate to transfer electrons derived from NADH and succinate to molecular oxygen, creating an electrochemical gradient over the inner membrane that drives transmembrane transport and the ATP synthase. Cytochrome c oxidase is the component of the respiratory chain that catalyzes the reduction of oxygen to water. Electrons originating from reduced cytochrome c in the intermembrane space (IMS) are transferred via the dinuclear copper A center (CU(A)) of subunit 2 and heme A of subunit 1 to the active site in subunit 1, a binuclear center (BNC) formed by heme A3 and copper B (CU(B)). The BNC reduces molecular oxygen to 2 water molecules using 4 electrons from cytochrome c in the IMS and 4 protons from the mitochondrial matrix. The protein is Cytochrome c oxidase subunit 2 (MT-CO2) of Anisomys imitator (Uneven-toothed rat).